The following is a 426-amino-acid chain: 3-phosphoshikimate 1-carboxyvinyltransferase (426 aa).

Residues lysine 22, serine 23, and arginine 27 each coordinate 3-phosphoshikimate. A phosphoenolpyruvate-binding site is contributed by lysine 22. The phosphoenolpyruvate site is built by glycine 96 and arginine 124. Residues serine 170, serine 171, glutamine 172, serine 198, aspartate 314, asparagine 337, and lysine 341 each coordinate 3-phosphoshikimate. Residue glutamine 172 participates in phosphoenolpyruvate binding. The active-site Proton acceptor is the aspartate 314. Positions 345, 387, and 412 each coordinate phosphoenolpyruvate.

It belongs to the EPSP synthase family. Monomer.

Its subcellular location is the cytoplasm. It catalyses the reaction 3-phosphoshikimate + phosphoenolpyruvate = 5-O-(1-carboxyvinyl)-3-phosphoshikimate + phosphate. The protein operates within metabolic intermediate biosynthesis; chorismate biosynthesis; chorismate from D-erythrose 4-phosphate and phosphoenolpyruvate: step 6/7. In terms of biological role, catalyzes the transfer of the enolpyruvyl moiety of phosphoenolpyruvate (PEP) to the 5-hydroxyl of shikimate-3-phosphate (S3P) to produce enolpyruvyl shikimate-3-phosphate and inorganic phosphate. The polypeptide is 3-phosphoshikimate 1-carboxyvinyltransferase (Shewanella baltica (strain OS155 / ATCC BAA-1091)).